The sequence spans 448 residues: Tubulin beta-2 chain (448 aa).

Gln-11, Glu-69, Ser-138, Gly-142, Thr-143, Gly-144, Asn-204, and Asn-226 together coordinate GTP. Glu-69 lines the Mg(2+) pocket. The interval 429 to 448 (TADEDGYEYEDEEEVGEEDA) is disordered.

Belongs to the tubulin family. In terms of assembly, dimer of alpha and beta chains. A typical microtubule is a hollow water-filled tube with an outer diameter of 25 nm and an inner diameter of 15 nM. Alpha-beta heterodimers associate head-to-tail to form protofilaments running lengthwise along the microtubule wall with the beta-tubulin subunit facing the microtubule plus end conferring a structural polarity. Microtubules usually have 13 protofilaments but different protofilament numbers can be found in some organisms and specialized cells. It depends on Mg(2+) as a cofactor.

It is found in the cytoplasm. The protein resides in the cytoskeleton. Functionally, tubulin is the major constituent of microtubules, a cylinder consisting of laterally associated linear protofilaments composed of alpha- and beta-tubulin heterodimers. Microtubules grow by the addition of GTP-tubulin dimers to the microtubule end, where a stabilizing cap forms. Below the cap, tubulin dimers are in GDP-bound state, owing to GTPase activity of alpha-tubulin. The protein is Tubulin beta-2 chain (TUBB2) of Lupinus albus (White lupine).